We begin with the raw amino-acid sequence, 196 residues long: Guanylate kinase (196 aa).

Positions 1 to 24 are disordered; it reads MPVESGAGNDQPKRLTVLSGPSGV. A Guanylate kinase-like domain is found at 13-191; that stretch reads KRLTVLSGPS…VCDELLALIA (179 aa). 20-27 is a binding site for ATP; sequence GPSGVGKS.

Belongs to the guanylate kinase family.

It is found in the cytoplasm. The catalysed reaction is GMP + ATP = GDP + ADP. Functionally, essential for recycling GMP and indirectly, cGMP. The polypeptide is Guanylate kinase (Thermobifida fusca (strain YX)).